We begin with the raw amino-acid sequence, 370 residues long: Small ribosomal subunit biogenesis GTPase RsgA (370 aa).

The CP-type G domain maps to 111–270; it reads RSEGQILAAN…LIDTPGLRGV (160 aa). GTP is bound by residues 158–161 and 212–220; these read TKAD and GQSGAGKST. Zn(2+)-binding residues include Cys293, Cys298, His300, and Cys306.

Belongs to the TRAFAC class YlqF/YawG GTPase family. RsgA subfamily. Monomer. Associates with 30S ribosomal subunit, binds 16S rRNA. Zn(2+) serves as cofactor.

Its subcellular location is the cytoplasm. In terms of biological role, one of several proteins that assist in the late maturation steps of the functional core of the 30S ribosomal subunit. Helps release RbfA from mature subunits. May play a role in the assembly of ribosomal proteins into the subunit. Circularly permuted GTPase that catalyzes slow GTP hydrolysis, GTPase activity is stimulated by the 30S ribosomal subunit. This chain is Small ribosomal subunit biogenesis GTPase RsgA, found in Streptomyces avermitilis (strain ATCC 31267 / DSM 46492 / JCM 5070 / NBRC 14893 / NCIMB 12804 / NRRL 8165 / MA-4680).